The primary structure comprises 314 residues: Olfactory receptor 5P67 (314 aa).

Residues 1–28 (MAFLEDGNHTAVTEFILLGLTDDPVLRV) lie on the Extracellular side of the membrane. An N-linked (GlcNAc...) asparagine glycan is attached at Asn8. Residues 29-49 (ILFTIILCIYLVTVSGNLSTI) form a helical membrane-spanning segment. Residues 50–57 (LLIRVSSQ) are Cytoplasmic-facing. The chain crosses the membrane as a helical span at residues 58–78 (LHHPMYFFLSHVGSVDIGYSS). At 79 to 102 (SVTPNMLVNFLVEKHTIAYLGCGI) the chain is on the extracellular side. Cys100 and Cys192 are oxidised to a cystine. Residues 103 to 123 (QLSSAAFFGTAECFLLATMAY) traverse the membrane as a helical segment. At 124–136 (DRFVAICNPLLYS) the chain is on the cytoplasmic side. A helical membrane pass occupies residues 137 to 157 (TKMSTQTCIQLVVGSYTGGIL). The Extracellular segment spans residues 158-199 (NASFAIISFFSFLFCGPNRINHFYCDFAPLVELSCSDINVSV). Residues 200-220 (VITTIFSASVTIITVFVIAIS) traverse the membrane as a helical segment. At 221-240 (YTYILITILKMRSTEGRHKA) the chain is on the cytoplasmic side. The helical transmembrane segment at 241–261 (FSTCTSYLTAVTLFYGTVTFI) threads the bilayer. Over 262–274 (YVVPKSNYSTDQN) the chain is Extracellular. N-linked (GlcNAc...) asparagine glycosylation occurs at Asn268. The helical transmembrane segment at 275–295 (KVASVFYIVVIPMLNPLIYSL) threads the bilayer. The Cytoplasmic segment spans residues 296–314 (RNNDIKGALKRQLGKKTFS).

The protein belongs to the G-protein coupled receptor 1 family.

It localises to the cell membrane. Its function is as follows. Potential odorant receptor. The sequence is that of Olfactory receptor 5P67 from Mus musculus (Mouse).